We begin with the raw amino-acid sequence, 2357 residues long: Myosin-I heavy chain (2357 aa).

The Myosin motor domain occupies 13-688; the sequence is QPVEDMITLP…QYLKLEELRK (676 aa). An ATP-binding site is contributed by 106 to 113; the sequence is GESGAGKT. Positions 579–586 are actin-binding; that stretch reads YVRCIKPN. Positions 691–720 constitute an IQ domain; the sequence is LLKKVTLIQSVWRMYRCKKRYQQIRASAKI. The stretch at 787 to 891 forms a coiled coil; the sequence is KRDRNARMLE…QDKNINELDD (105 aa). The tract at residues 787–1076 is binding to talin A; the sequence is KRDRNARMLE…PILGAPPPPP (290 aa). Disordered regions lie at residues 797 to 852 and 974 to 1112; these read IQRE…EEEL and ASSF…NPQP. Low complexity-rich tracts occupy residues 1003–1025 and 1078–1106; these read NNNY…SDFS and TSDS…QSTN. Residues 1155–1313 form the MyTH4 1 domain; it reads YQKSHIKSSL…PSVTELESIK (159 aa). Positions 1318-1620 constitute an FERM 1 domain; sequence IFVRITATDG…EYSLYLRNNA (303 aa). The region spanning 1618 to 1678 is the SH3 domain; that stretch reads NNAKYARALK…PVDHVEILLS (61 aa). Residues 1686 to 1849 are disordered; sequence VHPVATLSPP…PSKRLTVSPA (164 aa). Over residues 1706–1733 the composition is skewed to pro residues; the sequence is TPPPPPSISDSMSPPPQVGMLPPPPPPS. Composition is skewed to low complexity over residues 1734–1746 and 1755–1770; these read VMGS…IPSL and SSNS…SPMM. Positions 1817–1828 are enriched in polar residues; that stretch reads FRSSLRVSMLNT. Residues 1894–2051 form the MyTH4 2 domain; it reads FNKDPIKESL…PSATEIQSFR (158 aa). The 298-residue stretch at 2060-2357 folds into the FERM 2 domain; it reads STCKIRFIDQ…ASVYQFYSSQ (298 aa).

The protein belongs to the TRAFAC class myosin-kinesin ATPase superfamily. Myosin family. In terms of assembly, monomer. Interacts with talA.

The protein localises to the cytoplasm. Myosins are actin-based motor molecules with ATPase activity. Involved in the early steps of phagocytosis and adhesion. This Dictyostelium discoideum (Social amoeba) protein is Myosin-I heavy chain (myoI).